The sequence spans 200 residues: Ankyrin repeat-containing protein YAR1 (200 aa).

ANK repeat units follow at residues 49 to 78 (SDST…RANS) and 92 to 121 (TGNT…ADPF). At S78 the chain carries Phosphoserine. Positions 152–173 (VEPEDDEEDTQTEGKNSVQITK) are disordered. The span at 153 to 162 (EPEDDEEDTQ) shows a compositional bias: acidic residues. Residues 164–173 (EGKNSVQITK) show a composition bias toward polar residues.

Functionally, required for normal rate of cell proliferation. This chain is Ankyrin repeat-containing protein YAR1 (YAR1), found in Saccharomyces cerevisiae (strain ATCC 204508 / S288c) (Baker's yeast).